The sequence spans 102 residues: uncharacterized protein (102 aa).

The segment at M1–T71 is disordered. Over M1–D79 the chain is Extracellular. Residues S56 to T71 are compositionally biased toward polar residues. An N-linked (GlcNAc...) asparagine; by host glycan is attached at N65. A helical transmembrane segment spans residues I80–M97. The Cytoplasmic portion of the chain corresponds to R98–Q102.

The protein belongs to the HHV-5 UL15A protein family.

It is found in the host membrane. This is an uncharacterized protein from Human cytomegalovirus (strain AD169) (HHV-5).